A 492-amino-acid chain; its full sequence is MAQKTLLIITDGIGHKPSSPHNAFTQAKKPTYDSLFASAPHALLSTHGLSVGLPEGQMGNSEVGHMCIGAGRILYQDLVKISLALKDGSLEKNPTLLGFSSRAKRIHLAGLASDGGVHSHMEHLLGLAQIFSRLGHEVLLHLITDGRDVSPTSSKEFIAQALALESDLIKIATISGRYYAMDRDKRWDRIKRAFGVIARGDSPTSLTPQEYIQAQYQAGITDEFIEPAALGGYQGFEPSDGFVFANFRSDRAREIVSALGGASFEGFDRGAYQPPKTLAMTSYDDSFPFPILFPKEKVEPTLAQVISEAGLSQLHVAETEKYAHVTFFFNGGIETPWENESRVLIPSPSVATYDLKPEMSAPEVAEATLSGMRQGYDFIVVNFANGDMVGHTGNTEAAISAVESVDRELGRLLEEAKKSGYAVILTSDHGNCEEMRDERGSMLTNHTVGEVWCFILAQGVTEIREGGLNQVAPTVLKIMGLPTPKEMDSPLF.

The Mn(2+) site is built by Asp-11 and Ser-61. Ser-61 (phosphoserine intermediate) is an active-site residue. Substrate-binding positions include His-118, 147–148 (RD), Arg-177, Arg-183, 248–251 (RSDR), and Lys-321. Positions 387, 391, 428, 429, and 446 each coordinate Mn(2+).

The protein belongs to the BPG-independent phosphoglycerate mutase family. Monomer. Mn(2+) is required as a cofactor.

It catalyses the reaction (2R)-2-phosphoglycerate = (2R)-3-phosphoglycerate. It participates in carbohydrate degradation; glycolysis; pyruvate from D-glyceraldehyde 3-phosphate: step 3/5. Functionally, catalyzes the interconversion of 2-phosphoglycerate and 3-phosphoglycerate. The protein is 2,3-bisphosphoglycerate-independent phosphoglycerate mutase of Wolinella succinogenes (strain ATCC 29543 / DSM 1740 / CCUG 13145 / JCM 31913 / LMG 7466 / NCTC 11488 / FDC 602W) (Vibrio succinogenes).